The following is a 425-amino-acid chain: Protein disulfide isomerase-like 5-3 (425 aa).

A signal peptide spans 1–28; sequence MGKPTLPPVVVVVVLLLLVVVLPATTCG. The region spanning 29–153 is the Thioredoxin domain; the sequence is ADAGGGGEAE…LVENLKKLVA (125 aa). Residues Cys75 and Cys78 each act as nucleophile in the active site. Cys75 and Cys78 are joined by a disulfide. A helical membrane pass occupies residues 386 to 406; the sequence is LLGVNAVYILVFLVAVLVLLM.

It belongs to the protein disulfide isomerase family.

The protein localises to the membrane. Its function is as follows. Acts as a protein-folding catalyst that interacts with nascent polypeptides to catalyze the formation, isomerization, and reduction or oxidation of disulfide bonds. May play a role in storage protein biogenesis. The protein is Protein disulfide isomerase-like 5-3 (PDIL5-3) of Oryza sativa subsp. japonica (Rice).